A 668-amino-acid chain; its full sequence is UvrABC system protein C (668 aa).

The 78-residue stretch at 14 to 91 (DSPGCYLHKD…IQRYKPKYNI (78 aa)) folds into the GIY-YIG domain. One can recognise a UVR domain in the interval 196–231 (KKIVNELEAKMMVSSDNMEFEQAAEYRDVIKAIGTL).

Belongs to the UvrC family. As to quaternary structure, interacts with UvrB in an incision complex.

It localises to the cytoplasm. The UvrABC repair system catalyzes the recognition and processing of DNA lesions. UvrC both incises the 5' and 3' sides of the lesion. The N-terminal half is responsible for the 3' incision and the C-terminal half is responsible for the 5' incision. This Lactococcus lactis subsp. lactis (strain IL1403) (Streptococcus lactis) protein is UvrABC system protein C.